The primary structure comprises 489 residues: Inositol-pentakisphosphate 2-kinase (489 aa).

The EXKPK motif motif lies at 136–140; it reads EIKPK.

Belongs to the IPK1 type 2 family.

Its subcellular location is the cytoplasm. The protein localises to the nucleus. It carries out the reaction 1D-myo-inositol 1,3,4,5,6-pentakisphosphate + ATP = 1D-myo-inositol hexakisphosphate + ADP + H(+). Phosphorylates Ins(1,3,4,5,6)P5 at position 2 to form Ins(1,2,3,4,5,6)P6 (InsP6 or phytate). InsP6 is involved in many processes such as mRNA export, non-homologous end-joining, endocytosis, ion channel regulation. It also protects cells from TNF-alpha-induced apoptosis. The polypeptide is Inositol-pentakisphosphate 2-kinase (Ippk) (Rattus norvegicus (Rat)).